We begin with the raw amino-acid sequence, 63 residues long: Venom peptide 2b (63 aa).

The first 22 residues, 1-22 (MRGTSFILFAVVVILGFLHGNA), serve as a signal peptide directing secretion. 5 AXPX repeats span residues 22 to 25 (AEPL), 26 to 29 (ANPE), 32 to 35 (ANPD), 38 to 41 (ANPD), and 44 to 47 (ANPE). Residues 23-48 (EPLANPEPSANPDPLANPDPLANPEA) constitute a propeptide that is removed on maturation. A Leucine amide modification is found at Leu62.

The protein belongs to the MCD family. Mastoparan subfamily. Expressed by the venom gland.

It localises to the secreted. The protein localises to the target cell membrane. In terms of biological role, antimicrobial peptide with strong and moderate activity against the fungi B.cinerea (MIC=5 uM) and C.albicans (MIC=100 uM), the Gram-negative bacterium E.coli (MIC=200 uM) and the Gram-positive bacterium S.aureus (MIC=25 uM). Shows cytolytic activity against insect cell lines. Has potent hemolytic activity against human erythrocytes (EC(50)=64 uM). In vivo, peptide injection in the vicinity of the head and thorax of lepidopteran larvae induces feeding disorder followed by death due to starvation. The protein is Venom peptide 2b of Eumenes pomiformis (Potter wasp).